We begin with the raw amino-acid sequence, 350 residues long: Heme A synthase (350 aa).

8 helical membrane-spanning segments follow: residues 14-34 (VAIW…IGGF), 95-115 (YVHR…FIYF), 125-145 (VVIK…AGWY), 162-182 (LALH…QFFD), 202-222 (VGII…VAGL), 260-280 (VQFI…ILTV), 296-316 (IIQI…AIAI), and 317-337 (AHQV…CYLR). H264 provides a ligand contact to heme. H318 is a binding site for heme.

This sequence belongs to the COX15/CtaA family. Type 2 subfamily. In terms of assembly, interacts with CtaB. The cofactor is heme b.

It localises to the cell membrane. It catalyses the reaction Fe(II)-heme o + 2 A + H2O = Fe(II)-heme a + 2 AH2. It participates in porphyrin-containing compound metabolism; heme A biosynthesis; heme A from heme O: step 1/1. Catalyzes the conversion of heme O to heme A by two successive hydroxylations of the methyl group at C8. The first hydroxylation forms heme I, the second hydroxylation results in an unstable dihydroxymethyl group, which spontaneously dehydrates, resulting in the formyl group of heme A. The polypeptide is Heme A synthase (Wolbachia pipientis wMel).